The sequence spans 702 residues: Cytolytic toxin-alpha (702 aa).

The tract at residues Ser-2 to Ser-265 is structural MACPF/CDC pore-forming domain. N-linked (GlcNAc...) asparagine glycans are attached at residues Asn-93, Asn-100, Asn-201, Asn-287, and Asn-311. Residues Gln-266 to Ala-385 form a structural FAT domain region. Positions Val-386 to Val-513 are thioredoxin (THX) domain. The B30.2/SPRY domain occupies Ile-505 to Leu-702. Asn-530 carries an N-linked (GlcNAc...) asparagine glycan.

It belongs to the SNTX/VTX toxin family. As to quaternary structure, heterodimer of alpha and beta subunits; non-covalently linked. Also associates into tetramers or even higher aggregates. Intrachain disulfide bonds may be present in the heterodimer. In terms of tissue distribution, expressed by the venom gland.

The protein resides in the secreted. Functionally, this heterodimer induces potent hemolytic activities (when tested on rabbit erythrocytes, EC(50)=25-56 ng/mL) due to its ability to form pores in the cell membrane. The pore may be composed of 10 alpha/beta heterodimers. The toxin shows cardiovascular effects that include a vasorelaxant action that may involve the L-arginine-nitric oxid synthase pathway. In addition, it displays edema-inducing activities, increases vascular permeability. It also shows myotoxic activities and interferes irreversibly with neuromuscular function. It also induces irreversible platelet aggregation in rabbit or rat (but not in human or mouse) whole blood. In addition, it has been observed to increase spontaneous quantal acetylcholine release from isolated frog cutaneous pectoris motor endings. This Scorpaena plumieri (Spotted scorpionfish) protein is Cytolytic toxin-alpha.